Consider the following 224-residue polypeptide: 2-C-methyl-D-erythritol 4-phosphate cytidylyltransferase (224 aa).

The protein belongs to the IspD/TarI cytidylyltransferase family. IspD subfamily.

It catalyses the reaction 2-C-methyl-D-erythritol 4-phosphate + CTP + H(+) = 4-CDP-2-C-methyl-D-erythritol + diphosphate. It functions in the pathway isoprenoid biosynthesis; isopentenyl diphosphate biosynthesis via DXP pathway; isopentenyl diphosphate from 1-deoxy-D-xylulose 5-phosphate: step 2/6. Catalyzes the formation of 4-diphosphocytidyl-2-C-methyl-D-erythritol from CTP and 2-C-methyl-D-erythritol 4-phosphate (MEP). The protein is 2-C-methyl-D-erythritol 4-phosphate cytidylyltransferase of Caldicellulosiruptor bescii (strain ATCC BAA-1888 / DSM 6725 / KCTC 15123 / Z-1320) (Anaerocellum thermophilum).